Reading from the N-terminus, the 153-residue chain is MSVTDLVLVVFIALLLIYAIYDEFIMNMMKGKTRLQVHLKRKNKLDCMIFVGLIGILIYNNVMAHGAPLTTYLLVGLALVAVYISYIRWPKLLFKNTGFFYANTFIEYSRIKSMNLSEDGILVIDLEQRRLLIQVKKLDDLEKIYNFFIENQS.

The next 3 membrane-spanning stretches (helical) occupy residues 6-26 (LVLV…EFIM), 45-65 (LDCM…VMAH), and 67-87 (APLT…ISYI).

The protein belongs to the UPF0266 family.

The protein resides in the cell inner membrane. The sequence is that of UPF0266 membrane protein YPTB1631 from Yersinia pseudotuberculosis serotype I (strain IP32953).